Here is a 201-residue protein sequence, read N- to C-terminus: 3-isopropylmalate dehydratase small subunit (201 aa).

The protein belongs to the LeuD family. LeuD type 1 subfamily. Heterodimer of LeuC and LeuD.

It carries out the reaction (2R,3S)-3-isopropylmalate = (2S)-2-isopropylmalate. It participates in amino-acid biosynthesis; L-leucine biosynthesis; L-leucine from 3-methyl-2-oxobutanoate: step 2/4. Functionally, catalyzes the isomerization between 2-isopropylmalate and 3-isopropylmalate, via the formation of 2-isopropylmaleate. This is 3-isopropylmalate dehydratase small subunit from Shewanella sp. (strain MR-4).